Reading from the N-terminus, the 297-residue chain is Cell division protein FtsQ (297 aa).

Topologically, residues 1 to 33 are cytoplasmic; that stretch reads MRPLSFRRRTAQARPDPAPSRLSYRVQRLLLTP. Residues 34–54 form a helical membrane-spanning segment; that stretch reads LFHALIRVGLPAFVLAFGVGW. Over 55–297 the chain is Periplasmic; sequence LLQNQELRDE…IRGLTNDRIE (243 aa). Positions 82-150 constitute a POTRA domain; that stretch reads FMVNAMSVSG…GILAIEIVER (69 aa).

Belongs to the FtsQ/DivIB family. FtsQ subfamily.

The protein localises to the cell inner membrane. Its function is as follows. Essential cell division protein. In Dinoroseobacter shibae (strain DSM 16493 / NCIMB 14021 / DFL 12), this protein is Cell division protein FtsQ.